We begin with the raw amino-acid sequence, 898 residues long: Putative aconitate hydratase, cytoplasmic (898 aa).

Substrate contacts are provided by residues glutamine 90 and 209–211 (DSH). The [4Fe-4S] cluster site is built by cysteine 441, cysteine 507, and cysteine 510. Residues arginine 540, arginine 545, arginine 703, and 784–785 (SR) each bind substrate.

Belongs to the aconitase/IPM isomerase family. [4Fe-4S] cluster is required as a cofactor.

It is found in the cytoplasm. It catalyses the reaction citrate = D-threo-isocitrate. It functions in the pathway carbohydrate metabolism; glyoxylate and dicarboxylate metabolism. Catalyzes the isomerization of citrate to isocitrate via cis-aconitate. The protein is Putative aconitate hydratase, cytoplasmic of Oryza sativa subsp. japonica (Rice).